The sequence spans 357 residues: MAIQSDSLSSLPDSPRIVAPQPVSPNEESIERALRPKALEEYVGQQRAREQLEIFIAAARKRGEALDHVLLFGPPGLGKTTLAHIIAHEMGVQLRQTSGPVLERPGDLAALLTNLERNDVLFIDEIHRLSPVVEEILYPALEDFQIDILIGEGPAARSVKLDLQPFTLVGATTRAGMLTNPLRDRFGIVSRLEFYNTDELARIVTRSASLLNADITADGAHEVARRSRGTPRIANRLLRRVRDYAQVKSHGVIDQDAAGRALAMLDVDPQGLDVMDRKLLEAIVHKFDGGPVGVDSLAAAIGEERDTIEDVIEPYLIQHGYLQRTPRGRTATLTTWRHLGLTPPAAASGGTGELFSK.

Over residues 1-15 the composition is skewed to low complexity; that stretch reads MAIQSDSLSSLPDSP. The tract at residues 1-30 is disordered; sequence MAIQSDSLSSLPDSPRIVAPQPVSPNEESI. The large ATPase domain (RuvB-L) stretch occupies residues 13-195; it reads DSPRIVAPQP…FGIVSRLEFY (183 aa). ATP contacts are provided by residues L34, R35, G76, K79, T80, T81, 142-144, R185, Y195, and R232; that span reads EDF. A Mg(2+)-binding site is contributed by T80. Positions 196 to 266 are small ATPAse domain (RuvB-S); sequence NTDELARIVT…AAGRALAMLD (71 aa). Residues 269–357 are head domain (RuvB-H); it reads PQGLDVMDRK…SGGTGELFSK (89 aa). 3 residues coordinate DNA: R305, R324, and R329.

Belongs to the RuvB family. In terms of assembly, homohexamer. Forms an RuvA(8)-RuvB(12)-Holliday junction (HJ) complex. HJ DNA is sandwiched between 2 RuvA tetramers; dsDNA enters through RuvA and exits via RuvB. An RuvB hexamer assembles on each DNA strand where it exits the tetramer. Each RuvB hexamer is contacted by two RuvA subunits (via domain III) on 2 adjacent RuvB subunits; this complex drives branch migration. In the full resolvosome a probable DNA-RuvA(4)-RuvB(12)-RuvC(2) complex forms which resolves the HJ.

The protein localises to the cytoplasm. The enzyme catalyses ATP + H2O = ADP + phosphate + H(+). In terms of biological role, the RuvA-RuvB-RuvC complex processes Holliday junction (HJ) DNA during genetic recombination and DNA repair, while the RuvA-RuvB complex plays an important role in the rescue of blocked DNA replication forks via replication fork reversal (RFR). RuvA specifically binds to HJ cruciform DNA, conferring on it an open structure. The RuvB hexamer acts as an ATP-dependent pump, pulling dsDNA into and through the RuvAB complex. RuvB forms 2 homohexamers on either side of HJ DNA bound by 1 or 2 RuvA tetramers; 4 subunits per hexamer contact DNA at a time. Coordinated motions by a converter formed by DNA-disengaged RuvB subunits stimulates ATP hydrolysis and nucleotide exchange. Immobilization of the converter enables RuvB to convert the ATP-contained energy into a lever motion, pulling 2 nucleotides of DNA out of the RuvA tetramer per ATP hydrolyzed, thus driving DNA branch migration. The RuvB motors rotate together with the DNA substrate, which together with the progressing nucleotide cycle form the mechanistic basis for DNA recombination by continuous HJ branch migration. Branch migration allows RuvC to scan DNA until it finds its consensus sequence, where it cleaves and resolves cruciform DNA. This chain is Holliday junction branch migration complex subunit RuvB, found in Bordetella pertussis (strain Tohama I / ATCC BAA-589 / NCTC 13251).